The primary structure comprises 210 residues: Large ribosomal subunit protein uL4 (210 aa).

The segment covering 41–51 has biased composition (polar residues); sequence ANARQGTQSTK. Disordered regions lie at residues 41–60 and 67–98; these read ANARQGTQSTKTRGEVQGSS and KGTGNARMGTNRSPVRRHGGVAFGPRPRDFSK.

The protein belongs to the universal ribosomal protein uL4 family. As to quaternary structure, part of the 50S ribosomal subunit.

In terms of biological role, one of the primary rRNA binding proteins, this protein initially binds near the 5'-end of the 23S rRNA. It is important during the early stages of 50S assembly. It makes multiple contacts with different domains of the 23S rRNA in the assembled 50S subunit and ribosome. Forms part of the polypeptide exit tunnel. This Dehalococcoides mccartyi (strain ATCC BAA-2266 / KCTC 15142 / 195) (Dehalococcoides ethenogenes (strain 195)) protein is Large ribosomal subunit protein uL4.